A 138-amino-acid polypeptide reads, in one-letter code: MLIPRKVAHRKQHHPGRTGAAKGGTRVTFGEYGIQALESAYVTNRQIESARIAMTRHIRRGGKVWINIYPDRPLTKKPAETRMGSGKGSPEWWVANVKPGRVLFELSGVAEPVAREAMRRAIHKLPMKCRFVVREGGA.

Residues 1–16 (MLIPRKVAHRKQHHPG) show a composition bias toward basic residues. The segment at 1-24 (MLIPRKVAHRKQHHPGRTGAAKGG) is disordered.

The protein belongs to the universal ribosomal protein uL16 family. In terms of assembly, part of the 50S ribosomal subunit.

In terms of biological role, binds 23S rRNA and is also seen to make contacts with the A and possibly P site tRNAs. The polypeptide is Large ribosomal subunit protein uL16 (Frankia alni (strain DSM 45986 / CECT 9034 / ACN14a)).